Here is a 227-residue protein sequence, read N- to C-terminus: Cytidylate kinase (227 aa).

12–20 (GPSGAGKGT) provides a ligand contact to ATP.

The protein belongs to the cytidylate kinase family. Type 1 subfamily.

The protein resides in the cytoplasm. The enzyme catalyses CMP + ATP = CDP + ADP. It catalyses the reaction dCMP + ATP = dCDP + ADP. In Sodalis glossinidius (strain morsitans), this protein is Cytidylate kinase.